Here is a 568-residue protein sequence, read N- to C-terminus: Methyl-accepting chemotaxis protein CtpH (568 aa).

Residues 1 to 39 are Cytoplasmic-facing; that stretch reads MPASPGHRDVLGCLVAACVPVQPGNPSRRSMLQQSLRAQ. The chain crosses the membrane as a helical span at residues 40–60; sequence ILVLLGGSLAALLLIALACFG. The Periplasmic portion of the chain corresponds to 61–216; the sequence is SLTGDVRAYR…ISAEARRTML (156 aa). The chain crosses the membrane as a helical span at residues 217 to 237; the sequence is LGSLVLIGASLAVALLSLWLV. Residues 238–568 are Cytoplasmic-facing; the sequence is NRNLVRPVQR…LGDALQRLRA (331 aa). The 53-residue stretch at 239-291 folds into the HAMP domain; that stretch reads RNLVRPVQRLIEHIAQLSHGDFGERIEIRRKDELGKLALAANTLRDFLVDIFD. A Methyl-accepting transducer domain is found at 296-532; that stretch reads STRDLDSASG…EISRNLTEIA (237 aa).

The protein belongs to the methyl-accepting chemotaxis (MCP) protein family.

It localises to the cell inner membrane. Chemotactic-signal transducers respond to changes in the concentration of attractants and repellents in the environment, transduce a signal from the outside to the inside of the cell, and facilitate sensory adaptation through the variation of the level of methylation. Chemoreceptor for inorganic phosphate, which is required for taxis at high concentrations of phosphate. Recognizes inorganic phosphate directly. Can also bind to other components that have a pyrophosphate group, including ATP and ADP. This is Methyl-accepting chemotaxis protein CtpH from Pseudomonas aeruginosa (strain ATCC 15692 / DSM 22644 / CIP 104116 / JCM 14847 / LMG 12228 / 1C / PRS 101 / PAO1).